A 152-amino-acid chain; its full sequence is Large ribosomal subunit protein bL9 (152 aa).

This sequence belongs to the bacterial ribosomal protein bL9 family.

In terms of biological role, binds to the 23S rRNA. This chain is Large ribosomal subunit protein bL9, found in Prochlorococcus marinus (strain MIT 9211).